Reading from the N-terminus, the 151-residue chain is Regulatory protein RecX (151 aa).

Belongs to the RecX family.

It localises to the cytoplasm. Functionally, modulates RecA activity. This Prosthecochloris aestuarii (strain DSM 271 / SK 413) protein is Regulatory protein RecX.